Consider the following 206-residue polypeptide: Protein GrpE (206 aa).

Residues methionine 1–valine 17 show a composition bias toward basic and acidic residues. Residues methionine 1–glutamate 20 form a disordered region.

Belongs to the GrpE family. Homodimer.

Its subcellular location is the cytoplasm. Its function is as follows. Participates actively in the response to hyperosmotic and heat shock by preventing the aggregation of stress-denatured proteins, in association with DnaK and GrpE. It is the nucleotide exchange factor for DnaK and may function as a thermosensor. Unfolded proteins bind initially to DnaJ; upon interaction with the DnaJ-bound protein, DnaK hydrolyzes its bound ATP, resulting in the formation of a stable complex. GrpE releases ADP from DnaK; ATP binding to DnaK triggers the release of the substrate protein, thus completing the reaction cycle. Several rounds of ATP-dependent interactions between DnaJ, DnaK and GrpE are required for fully efficient folding. This is Protein GrpE from Shewanella oneidensis (strain ATCC 700550 / JCM 31522 / CIP 106686 / LMG 19005 / NCIMB 14063 / MR-1).